The primary structure comprises 747 residues: Pentatricopeptide repeat-containing protein At5g39710 (747 aa).

PPR repeat units lie at residues 133 to 167 (TSSV…GFMP), 168 to 203 (GVLS…QVSP), 204 to 238 (NVFT…GCLP), 239 to 273 (NVVT…GLEP), 274 to 308 (NLIS…GYSL), 309 to 343 (DEVT…GLTP), 344 to 378 (SVIT…GLCP), 379 to 413 (NERT…GFSP), 414 to 448 (SVVT…GLSP), 449 to 483 (DVVS…GIKP), 484 to 518 (DTIT…GLPP), 519 to 553 (DEFT…GVLP), 554 to 588 (DVVT…ESVP), 604 to 638 (EFKS…NHKP), and 639 to 673 (DGTA…GFLL).

Belongs to the PPR family. P subfamily.

The sequence is that of Pentatricopeptide repeat-containing protein At5g39710 (EMB2745) from Arabidopsis thaliana (Mouse-ear cress).